A 144-amino-acid chain; its full sequence is Arsenate reductase ArsI1 (144 aa).

Residue Cys-14 is the Nucleophile; cysteine thioarsenate intermediate of the active site.

This sequence belongs to the ArsC family.

The enzyme catalyses [glutaredoxin]-dithiol + arsenate + glutathione + H(+) = glutathionyl-S-S-[glutaredoxin] + arsenite + H2O. Catalyzes the reduction of arsenate [As(V)] to arsenite [As(III)]. Does not constitute the major arsenate reductase in cells: essential only in the absence of ArsC (AC P74313). The sequence is that of Arsenate reductase ArsI1 from Synechocystis sp. (strain ATCC 27184 / PCC 6803 / Kazusa).